A 430-amino-acid chain; its full sequence is MAKIQAIRGTKDILPDEQLYWQFIHEKVASLLKYANYKEIKTPIFENSDLYDRGIGENTDIVNKEMYRFNDRSNRDITLRPEGTAGVVRAFIENRMDVQNRLQKLWYSGPMFRYERPQSGRQRQFHQLGIEFIGSSDARADAEIIHLAMNIFNDLSVNDLQLDINSIGKAEDRNHYQAKLQEYLEQYYDDLDTDSQNRLSSNPIRILDTKNKYTQTILNDSPRISDFLSLESEKHFDDVCDYLTLLNVPYKINTQLVRGLDYYNDTAFEIKILKSQGQDTLCGGGRYDSLIHQLGGNKTPAVGCAIGLERLLLVAKDNILLPHMSIDCYIVSKGIKARKIGIIITQFLRNQLVKTELDISSSNFGKQLKQAHKKRAIACLILGDNEIQQETITIKWMYTQEQENMSIIEFKNKISYLKKKIAFNKKFNSY.

It belongs to the class-II aminoacyl-tRNA synthetase family.

It localises to the plastid. The protein resides in the chloroplast. The catalysed reaction is tRNA(His) + L-histidine + ATP = L-histidyl-tRNA(His) + AMP + diphosphate + H(+). The polypeptide is Histidine--tRNA ligase, chloroplastic (hisS) (Porphyra purpurea (Red seaweed)).